Reading from the N-terminus, the 390-residue chain is Nuclear receptor subfamily 2 group F member 6 (390 aa).

The span at 1-15 shows a compositional bias: gly residues; that stretch reads MAMVTGGWGGPGGDT. Residues 1-50 form a disordered region; it reads MAMVTGGWGGPGGDTNGVDKAGGSYPRATEDDSASPPGATSDAEPGDEER. 2 positions are modified to phosphoserine: Ser35 and Ser41. A DNA-binding region (nuclear receptor) is located at residues 54–129; sequence QVDCVVCGDK…VGMRKEAVQP (76 aa). NR C4-type zinc fingers lie at residues 57-77 and 93-117; these read CVVC…CEGC and CRSN…LKKC. The region spanning 157–380 is the NR LBD domain; that stretch reads PVSELIAQLL…TLIRDMLLSG (224 aa). The interval 314-390 is important for dimerization; that stretch reads LQEKAQVALT…STFNWPYGSG (77 aa).

It belongs to the nuclear hormone receptor family. NR2 subfamily. In terms of assembly, binds DNA as dimer; homodimer and heterodimer with NR2F2 and probably NR2F1. Interacts with THRB.

It is found in the nucleus. Transcription factor predominantly involved in transcriptional repression. Binds to promoter/enhancer response elements that contain the imperfect 5'-AGGTCA-3' direct or inverted repeats with various spacings which are also recognized by other nuclear hormone receptors. Involved in modulation of hormonal responses. Represses transcriptional activity of the lutropin-choriogonadotropic hormone receptor/LHCGR gene, the renin/REN gene and the oxytocin-neurophysin/OXT gene. Represses the triiodothyronine-dependent and -independent transcriptional activity of the thyroid hormone receptor gene in a cell type-specific manner. The corepressing function towards thyroid hormone receptor beta/THRB involves at least in part the inhibition of THRB binding to triiodothyronine response elements (TREs) by NR2F6. Inhibits NFATC transcription factor DNA binding and subsequently its transcriptional activity. Acts as transcriptional repressor of IL-17 expression in Th-17 differentiated CD4(+) T cells and may be involved in induction and/or maintenance of peripheral immunological tolerance and autoimmunity. Involved in development of forebrain circadian clock; is required early in the development of the locus coeruleus (LC). The sequence is that of Nuclear receptor subfamily 2 group F member 6 (Nr2f6) from Rattus norvegicus (Rat).